We begin with the raw amino-acid sequence, 467 residues long: Flagellar hook-associated protein 2 (467 aa).

Residues 411–439 (VNATLKSLTKQYLSVSNSIDETVARYKAQ) adopt a coiled-coil conformation.

This sequence belongs to the FliD family. In terms of assembly, homopentamer.

Its subcellular location is the secreted. It is found in the bacterial flagellum. Required for the morphogenesis and for the elongation of the flagellar filament by facilitating polymerization of the flagellin monomers at the tip of growing filament. Forms a capping structure, which prevents flagellin subunits (transported through the central channel of the flagellum) from leaking out without polymerization at the distal end. The polypeptide is Flagellar hook-associated protein 2 (fliD) (Salmonella typhimurium (strain LT2 / SGSC1412 / ATCC 700720)).